Here is a 459-residue protein sequence, read N- to C-terminus: MNRSPSTSGLLPLPGTPSSSWALYRARLSNMFRNTDVSVVIAFWLFGLINNILYVLVLSAAQDLVGTSVPKGAVLLADVLPSFLTKLVAPYFIHRVPYSVRIAVFVALSCAGMLVVAAAPVEGAVGVKLLGVVLASLSSGGGELSFLGLTHYYGHGSLAAWGSGTGGAGLVGAGLYVVLTGWIGLGVRGSLLVGALLPSVMVVAFWGILPRGPLKGWKGGYERVAEPGEEEDGEEGFEDVPAGAASAGLLAPGPSVAATAYTHHHEGRTGRASFWGNVRRARALFFPYMLPLLLVYVAEYTINQGVAPTLLFPLDQSPFSEFREYYPFYGFLYQLGVFISRSSTPFIRIHHLYLPSFLQVANLVLLTLHAVLNFIPSVYLVFVVIFWEGLLGGAVYVNTFAEIMENVPAEDREFSLGATSVSDSGGICIAGFLGMAMEVWLCRWQVSQGRDYCRRIEAS.

Helical transmembrane passes span 37–57, 73–93, 102–122, 129–149, 167–187, 189–209, 240–260, 283–303, 325–342, 352–372, and 374–394; these read VSVVIAFWLFGLINNILYVLV, AVLLADVLPSFLTKLVAPYFI, IAVFVALSCAGMLVVAAAPVE, LLGVVLASLSSGGGELSFLGL, GAGLVGAGLYVVLTGWIGLGV, GSLLVGALLPSVMVVAFWGIL, VPAGAASAGLLAPGPSVAATA, ALFFPYMLPLLLVYVAEYTIN, YYPFYGFLYQLGVFISRS, LYLPSFLQVANLVLLTLHAVL, and FIPSVYLVFVVIFWEGLLGGA.

The protein belongs to the battenin family.

Its subcellular location is the vacuole membrane. Its function is as follows. Involved in vacuolar transport and vacuole pH homeostasis. Also required for cytokinesis. This is Protein BTN1 (BTN1) from Chaetomium globosum (strain ATCC 6205 / CBS 148.51 / DSM 1962 / NBRC 6347 / NRRL 1970) (Soil fungus).